Here is a 141-residue protein sequence, read N- to C-terminus: MAKKIIAKIKLQLEAGKATPAPPVGPALGQHGVNIMDFCKKFNAVTADKPGMVFPAVITVYADRSFTFELKTPPASFLILKAAGIKKGSGEPNKVKVGKITKAQVEEIAKIKMPDLNARTLEAAMKIIEGTARNMGVEVVD.

It belongs to the universal ribosomal protein uL11 family. As to quaternary structure, part of the ribosomal stalk of the 50S ribosomal subunit. Interacts with L10 and the large rRNA to form the base of the stalk. L10 forms an elongated spine to which L12 dimers bind in a sequential fashion forming a multimeric L10(L12)X complex. One or more lysine residues are methylated.

Its function is as follows. Forms part of the ribosomal stalk which helps the ribosome interact with GTP-bound translation factors. This Kosmotoga olearia (strain ATCC BAA-1733 / DSM 21960 / TBF 19.5.1) protein is Large ribosomal subunit protein uL11.